Consider the following 260-residue polypeptide: Thiazole synthase (260 aa).

Catalysis depends on K96, which acts as the Schiff-base intermediate with DXP. 1-deoxy-D-xylulose 5-phosphate contacts are provided by residues G157, 184–185 (AG), and 206–207 (NT).

Belongs to the ThiG family. As to quaternary structure, homotetramer. Forms heterodimers with either ThiH or ThiS.

It is found in the cytoplasm. It carries out the reaction [ThiS sulfur-carrier protein]-C-terminal-Gly-aminoethanethioate + 2-iminoacetate + 1-deoxy-D-xylulose 5-phosphate = [ThiS sulfur-carrier protein]-C-terminal Gly-Gly + 2-[(2R,5Z)-2-carboxy-4-methylthiazol-5(2H)-ylidene]ethyl phosphate + 2 H2O + H(+). The protein operates within cofactor biosynthesis; thiamine diphosphate biosynthesis. Catalyzes the rearrangement of 1-deoxy-D-xylulose 5-phosphate (DXP) to produce the thiazole phosphate moiety of thiamine. Sulfur is provided by the thiocarboxylate moiety of the carrier protein ThiS. In vitro, sulfur can be provided by H(2)S. This Bradyrhizobium diazoefficiens (strain JCM 10833 / BCRC 13528 / IAM 13628 / NBRC 14792 / USDA 110) protein is Thiazole synthase.